A 517-amino-acid polypeptide reads, in one-letter code: MAALRLLASVLGRGVPAGGSGLALSQGCARCFATSPRLRAKFYADPVEMVKDISDGATVMIGGFGLCGIPENLIAALLRTRVKDLQVVSSNVGVEDFGLGLLLAARQVRRIVCSYVGENTLCESQYLAGELELELTPQGTLAERIRAGGAGVPAFYTPTGYGTLVQEGGAPIRYTPDGHLALMSQPREVREFNGDHFLLERAIRADFALVKGWKADRAGNVVFRRSARNFNVPMCKAADVTAVEVEEIVEVGAFPPEDIHVPNIYVDRVIKGQKYEKRIERLTILKEEDGDAGKEEDARTRIIRRAALEFEDGMYANLGIGIPLLASNFISPSMTVHLHSENGILGLGPFPTEDEVDADLINAGKQTVTVLPGGCFFASDDSFAMIRGGHIQLTMLGAMQVSKYGDLANWMIPGKKVKGMGGAMDLVSSQKTRVVVTMQHCTKDNTPKIMEKCTMPLTGKRCVDRIITEKAVFDVHRKKELTLRELWEGLTVDDIKKSTGCAFAVSPNLRPMQQVAP.

The N-terminal 39 residues, 1–39 (MAALRLLASVLGRGVPAGGSGLALSQGCARCFATSPRLR), are a transit peptide targeting the mitochondrion. The active-site 5-glutamyl coenzyme A thioester intermediate is the Glu341.

Belongs to the 3-oxoacid CoA-transferase family. As to quaternary structure, homodimer. In terms of tissue distribution, testis specific.

It is found in the mitochondrion. The catalysed reaction is a 3-oxo acid + succinyl-CoA = a 3-oxoacyl-CoA + succinate. It participates in ketone metabolism; succinyl-CoA degradation; acetoacetyl-CoA from succinyl-CoA: step 1/1. Its function is as follows. Key enzyme for ketone body catabolism. Transfers the CoA moiety from succinate to acetoacetate. Formation of the enzyme-CoA intermediate proceeds via an unstable anhydride species formed between the carboxylate groups of the enzyme and substrate. The polypeptide is Succinyl-CoA:3-ketoacid coenzyme A transferase 2, mitochondrial (OXCT2) (Homo sapiens (Human)).